A 354-amino-acid polypeptide reads, in one-letter code: Soluble interferon alpha/beta receptor OPG204 (354 aa).

A signal peptide spans Met1 to Phe22. 2 Ig-like C2-type domains span residues Ile68 to Val150 and Pro158 to Ser240. Disulfide bonds link Cys76-Cys132 and Cys175-Cys224. Asn120, Asn124, Asn185, Asn272, and Asn324 each carry an N-linked (GlcNAc...) asparagine; by host glycan. The region spanning Pro249–Thr348 is the Ig-like V-type domain. Cysteines 275 and 336 form a disulfide.

The protein belongs to the interleukin-1 receptor family. As to quaternary structure, interacts with host IFNA1.

Its subcellular location is the secreted. Counteracts the antiviral effects of host IFN-alpha/beta and key IFN-inducible proteins involved in viral RNA degradation suxh as host OAS1. Acts as a soluble IFN-alpha receptor and thus inhibits the interaction between host IFN-alpha and its receptor. The chain is Soluble interferon alpha/beta receptor OPG204 (OPG204) from Homo sapiens (Human).